The chain runs to 342 residues: Cell division protein FtsQ (342 aa).

Over 1 to 80 (MDGAGSLTRS…ALVERYLPRR (80 aa)) the chain is Cytoplasmic. The helical transmembrane segment at 81 to 99 (VGISMTVLLLIGSCGFGIV) threads the bilayer. At 100–342 (KGGHLQDFVT…KKKKKAGDAA (243 aa)) the chain is on the periplasmic side. Positions 124–192 (FRITSVVING…GQLMIELTER (69 aa)) constitute a POTRA domain.

This sequence belongs to the FtsQ/DivIB family. FtsQ subfamily.

It is found in the cell inner membrane. Functionally, essential cell division protein. This Bradyrhizobium diazoefficiens (strain JCM 10833 / BCRC 13528 / IAM 13628 / NBRC 14792 / USDA 110) protein is Cell division protein FtsQ.